The following is a 460-amino-acid chain: Equilibrative nucleoside transporter 1 (460 aa).

The Cytoplasmic portion of the chain corresponds to 1–12 (MTTSHQPQDRYK). Residues 13–29 (AVWLIFFVLGLGTLLPW) traverse the membrane as a helical segment. Over 30–82 (NFFMTATKYFTNRLDVSQNVSSDTDQSCESTKALADPTVALPARSSLSAIFNN) the chain is Extracellular. N48 carries an N-linked (GlcNAc...) asparagine glycan. A helical transmembrane segment spans residues 83 to 107 (VMTLCAMLPLLVFTCLNSFLHQRIS). The Cytoplasmic portion of the chain corresponds to 108–111 (QSVR). The chain crosses the membrane as a helical span at residues 112–130 (ILGSLLAILLVFLVTAALV). The Extracellular portion of the chain corresponds to 131 to 138 (KVEMDALI). The chain crosses the membrane as a helical span at residues 139-157 (FFVITMIKIVLINSFGAIL). At 158 to 174 (QASLFGLAGVLPANYTA) the chain is on the cytoplasmic side. Residues 175 to 199 (PIMSGQGLAGFFTSVAMICAIASGS) traverse the membrane as a helical segment. Residues 200-206 (ELSESAF) are Extracellular-facing. A helical membrane pass occupies residues 207 to 227 (GYFITACAVVILAILCYLALP). At 228–291 (RTEFYRHYLQ…IKAILKSICV (64 aa)) the chain is on the cytoplasmic side. Phosphoserine is present on S254. Residues 255-266 (KGEEPKGRREES) show a composition bias toward basic and acidic residues. Residues 255–277 (KGEEPKGRREESGVPGPNSPPTN) are disordered. Position 273 is a phosphoserine (S273). A helical transmembrane segment spans residues 292–311 (PALSVCFIFTVTIGLFPAVT). Topologically, residues 312–323 (AEVESSIAGTSP) are extracellular. The helical transmembrane segment at 324-342 (WKSYFIPVACFLNFNVFDW) threads the bilayer. The Cytoplasmic segment spans residues 343 to 359 (LGRSLTAVCMWPGQDSR). The chain crosses the membrane as a helical span at residues 360–378 (WLPVLVASRIVFIPLLMLC). At 379 to 397 (NVKARHCGAQRHHFVFKHD) the chain is on the extracellular side. Residues 398 to 417 (AWFIAFMAAFAFSNGYLASL) traverse the membrane as a helical segment. The Cytoplasmic portion of the chain corresponds to 418-435 (CMCFGPKKVKPAEAETAG). Residues 436–456 (NIMSFFLCLGLALGAVLSFLL) form a helical membrane-spanning segment. The Extracellular portion of the chain corresponds to 457–460 (RALV).

It belongs to the SLC29A/ENT transporter (TC 2.A.57) family. Identified in a complex with STOM. Glycosylated. Highly expressed in heart, spleen, lung, liver and testis. Lower level of expression in brain and kidney. Expressed in adipose tissues, brown adipocytes expressing significantly higher amounts than white adipocytes. Expressed in seminiferous tubules.

The protein localises to the basolateral cell membrane. It is found in the apical cell membrane. It localises to the cell membrane. It catalyses the reaction adenosine(in) = adenosine(out). The enzyme catalyses guanosine(in) = guanosine(out). It carries out the reaction inosine(in) = inosine(out). The catalysed reaction is uridine(out) = uridine(in). It catalyses the reaction thymidine(in) = thymidine(out). The enzyme catalyses cytidine(in) = cytidine(out). It carries out the reaction adenine(out) = adenine(in). The catalysed reaction is guanine(out) = guanine(in). It catalyses the reaction thymine(out) = thymine(in). The enzyme catalyses uracil(in) = uracil(out). It carries out the reaction hypoxanthine(out) = hypoxanthine(in). Its activity is regulated as follows. Transporter activity is sensitive to low concentrations of the inhibitor nitrobenzylmercaptopurine riboside (NBMPR). In terms of biological role, uniporter involved in the facilitative transport of nucleosides and nucleobases, and contributes to maintaining their cellular homeostasis. Functions as a Na(+)-independent transporter. Involved in the transport of nucleosides such as adenosine, guanosine, inosine, uridine, thymidine and cytidine. Also transports purine (hypoxanthine, adenine, guanine) and pyrimidine nucleobases (thymine, uracil). Mediates basolateral nucleoside uptake into Sertoli cells, thereby regulating the transport of nucleosides in testis across the blood-testis-barrier. Regulates inosine levels in brown adipocytes tissues (BAT) and extracellular inosine levels, which controls BAT-dependent energy expenditure. This is Equilibrative nucleoside transporter 1 from Mus musculus (Mouse).